The following is a 399-amino-acid chain: Probable WRKY transcription factor 48 (399 aa).

2 stretches are compositionally biased toward basic and acidic residues: residues methionine 1–histidine 11 and lysine 19–glutamine 38. Disordered regions lie at residues methionine 1–aspartate 57 and alanine 138–lysine 202. Low complexity predominate over residues valine 143–asparagine 161. A compositionally biased stretch (polar residues) spans glutamate 162–lysine 171. Positions glutamine 184–glutamine 193 are enriched in low complexity. The segment at residues serine 215 to proline 280 is a DNA-binding region (WRKY). Residues glutamine 361–lysine 399 form a disordered region. A compositionally biased stretch (polar residues) spans glutamine 383–lysine 399.

The protein localises to the nucleus. Functionally, transcription factor. Interacts specifically with the W box (5'-(T)TGAC[CT]-3'), a frequently occurring elicitor-responsive cis-acting element. The sequence is that of Probable WRKY transcription factor 48 (WRKY48) from Arabidopsis thaliana (Mouse-ear cress).